A 289-amino-acid polypeptide reads, in one-letter code: Shikimate dehydrogenase (NADP(+)) (289 aa).

Residues 19 to 21 and threonine 66 each bind shikimate; that span reads SMS. Residue lysine 70 is the Proton acceptor of the active site. Residues asparagine 91 and aspartate 106 each coordinate shikimate. Residues 131–135, 155–160, and leucine 229 each bind NADP(+); these read GAGGA and NRTLKK. Residue tyrosine 231 coordinates shikimate. Position 252 (glycine 252) interacts with NADP(+).

This sequence belongs to the shikimate dehydrogenase family. Homodimer.

The catalysed reaction is shikimate + NADP(+) = 3-dehydroshikimate + NADPH + H(+). Its pathway is metabolic intermediate biosynthesis; chorismate biosynthesis; chorismate from D-erythrose 4-phosphate and phosphoenolpyruvate: step 4/7. Its function is as follows. Involved in the biosynthesis of the chorismate, which leads to the biosynthesis of aromatic amino acids. Catalyzes the reversible NADPH linked reduction of 3-dehydroshikimate (DHSA) to yield shikimate (SA). The chain is Shikimate dehydrogenase (NADP(+)) from Halothermothrix orenii (strain H 168 / OCM 544 / DSM 9562).